The sequence spans 303 residues: Coenzyme PQQ synthesis protein B (303 aa).

Belongs to the PqqB family.

Its pathway is cofactor biosynthesis; pyrroloquinoline quinone biosynthesis. May be involved in the transport of PQQ or its precursor to the periplasm. This Acinetobacter baumannii (strain ACICU) protein is Coenzyme PQQ synthesis protein B.